We begin with the raw amino-acid sequence, 549 residues long: Siroheme synthase (549 aa).

Residues 1-203 (MNTFPLFFKL…GNENEALAQL (203 aa)) are precorrin-2 dehydrogenase /sirohydrochlorin ferrochelatase. Residues 22-23 (DV) and 43-44 (PS) each bind NAD(+). The residue at position 128 (S128) is a Phosphoserine. A uroporphyrinogen-III C-methyltransferase region spans residues 247 to 549 (GEVYIVGAGP…DGDLEQLIIG (303 aa)). P256 is a binding site for S-adenosyl-L-methionine. The active-site Proton acceptor is the D279. The Proton donor role is filled by K301. Residues 332–334 (GGD), I337, 362–363 (TA), M414, and A443 each bind S-adenosyl-L-methionine.

This sequence in the N-terminal section; belongs to the precorrin-2 dehydrogenase / sirohydrochlorin ferrochelatase family. The protein in the C-terminal section; belongs to the precorrin methyltransferase family.

It carries out the reaction uroporphyrinogen III + 2 S-adenosyl-L-methionine = precorrin-2 + 2 S-adenosyl-L-homocysteine + H(+). It catalyses the reaction precorrin-2 + NAD(+) = sirohydrochlorin + NADH + 2 H(+). The catalysed reaction is siroheme + 2 H(+) = sirohydrochlorin + Fe(2+). It functions in the pathway cofactor biosynthesis; adenosylcobalamin biosynthesis; precorrin-2 from uroporphyrinogen III: step 1/1. It participates in cofactor biosynthesis; adenosylcobalamin biosynthesis; sirohydrochlorin from precorrin-2: step 1/1. The protein operates within porphyrin-containing compound metabolism; siroheme biosynthesis; precorrin-2 from uroporphyrinogen III: step 1/1. Its pathway is porphyrin-containing compound metabolism; siroheme biosynthesis; siroheme from sirohydrochlorin: step 1/1. It functions in the pathway porphyrin-containing compound metabolism; siroheme biosynthesis; sirohydrochlorin from precorrin-2: step 1/1. Functionally, multifunctional enzyme that catalyzes the SAM-dependent methylations of uroporphyrinogen III at position C-2 and C-7 to form precorrin-2 via precorrin-1. Then it catalyzes the NAD-dependent ring dehydrogenation of precorrin-2 to yield sirohydrochlorin. Finally, it catalyzes the ferrochelation of sirohydrochlorin to yield siroheme. The polypeptide is Siroheme synthase (Psychrobacter arcticus (strain DSM 17307 / VKM B-2377 / 273-4)).